The chain runs to 279 residues: B3 domain-containing protein Os11g0156000 (279 aa).

The TF-B3 DNA-binding region spans 38-144 (FEKPLTPSDV…DRLFIGCRRR (107 aa)). Disordered stretches follow at residues 148–182 (AAAQ…YSTS) and 203–228 (HDHG…AGSA). The span at 159 to 168 (VRVAPAAQNA) shows a compositional bias: low complexity. Positions 203–219 (HDHGDMHHADESPRDTD) are enriched in basic and acidic residues.

The protein resides in the nucleus. In Oryza sativa subsp. japonica (Rice), this protein is B3 domain-containing protein Os11g0156000.